The following is a 243-amino-acid chain: Small ribosomal subunit protein uS5 (243 aa).

2 stretches are compositionally biased toward basic and acidic residues: residues 1–21 (MPIDKKQEKNFTNKIQEEGQK) and 34–46 (LEEKLNKNPDHKG). A disordered region spans residues 1 to 85 (MPIDKKQEKN…NFKKNANKKP (85 aa)). The S5 DRBM domain maps to 89–152 (FEEKIVNIAR…KDAQNNLIRV (64 aa)).

It belongs to the universal ribosomal protein uS5 family. In terms of assembly, part of the 30S ribosomal subunit. Contacts proteins S4 and S8.

Functionally, with S4 and S12 plays an important role in translational accuracy. In terms of biological role, located at the back of the 30S subunit body where it stabilizes the conformation of the head with respect to the body. This chain is Small ribosomal subunit protein uS5, found in Mycoplasma mobile (strain ATCC 43663 / 163K / NCTC 11711) (Mesomycoplasma mobile).